Consider the following 68-residue polypeptide: Long neurotoxin 1 (68 aa).

Disulfide bonds link C3–C20, C13–C41, C26–C30, C45–C56, and C57–C62.

This sequence belongs to the three-finger toxin family. Long-chain subfamily. Type II alpha-neurotoxin sub-subfamily. Expressed by the venom gland.

It localises to the secreted. In terms of biological role, binds with high affinity to muscular (alpha-1/CHRNA1) and neuronal (alpha-7/CHRNA7) nicotinic acetylcholine receptor (nAChR) and inhibits acetylcholine from binding to the receptor, thereby impairing neuromuscular and neuronal transmission. In Aspidelaps scutatus (Shield-nose snake), this protein is Long neurotoxin 1.